We begin with the raw amino-acid sequence, 281 residues long: Gas vesicle protein L1 (281 aa).

This sequence belongs to the gas vesicle GvpF/GvpL family. As to quaternary structure, may form oligomers. GvpF to GvpM interact with each other in vitro, and may form multi-subunit complex(es). Interacts with GvpC1, GvpN1 and GvpO1.

Its subcellular location is the gas vesicle. The protein localises to the cytoplasm. Proteins GvpF to GvpM might be involved in nucleating gas vesicle formation. A minor component of the gas vesicle. This the only minor gas vesicle protein that binds all the others (including GvpC1, GvpN1 and GvpO1, but not GvpA1), suggesting it might be able to assemble them. Gas vesicles are hollow, gas filled proteinaceous nanostructures found in several microbial planktonic microorganisms. They allow positioning of halobacteria at the optimal depth for growth in the poorly aerated, shallow brine pools of their habitat. In terms of biological role, expression of a 9.5 kb p-vac DNA fragment containing 2 divergently transcribed regions (gvpD-gvpE-gvpF-gvpG-gvpH-gvpI-gvpJ-gvpK-gvpL-gvpM and gvpA-gvpC-gvpN-gvpO) allows H.volcanii to produce gas vesicles. A minimal gas vesicle can be made in H.volcanii by gvpA1-gvpO1 plus gvpF1-gvpG1-gvpJ1-gvpK1-gvpL1-gvpM1; lack of enough GvpJ1 prevents their formation. A similar region restores gas vesicle production in H.halobium without the p-vac locus, but it still has the c-vac locus. The chain is Gas vesicle protein L1 (gvpL11) from Halobacterium salinarum (strain ATCC 700922 / JCM 11081 / NRC-1) (Halobacterium halobium).